Here is a 313-residue protein sequence, read N- to C-terminus: Apolipoprotein E (313 aa).

Residues 1–18 (MKVLWVALVITLLAGCQA) form the signal peptide. A run of 8 repeats spans residues 79–100 (VLMD…EQLG), 101–122 (PIAQ…ARLA), 123–144 (SDME…AVMG), 145–166 (QTTD…KRLL), 167–188 (RDAE…EGSE), 189–209 (RSVS…RGRA), 210–229 (GTLA…QKLR), and 230–251 (GRVE…EQLE). The interval 79–251 (VLMDETMKEV…HLEEIREQLE (173 aa)) is 8 X 22 AA approximate tandem repeats. An LDL and other lipoprotein receptors binding region spans residues 157–167 (HLRKLRKRLLR). 161-164 (LRKR) lines the heparin pocket. Residues 209 to 286 (AGTLASQTLR…SWFEPLVEDM (78 aa)) form a lipid-binding and lipoprotein association region. 225–232 (HQKLRGRV) is a heparin binding site. Residues 262 to 313 (SQIRLQAEAFQARLKSWFEPLVEDMQRQWAGLVEKVQLAMATSSTSAPSENH) are homooligomerization. The segment at 274 to 286 (RLKSWFEPLVEDM) is specificity for association with VLDL.

It belongs to the apolipoprotein A1/A4/E family. As to quaternary structure, homotetramer. May interact with ABCA1; functionally associated with ABCA1 in the biogenesis of HDLs. May interact with APP/A4 amyloid-beta peptide; the interaction is extremely stable in vitro but its physiological significance is unclear. May interact with MAPT. May interact with MAP2. In the cerebrospinal fluid, interacts with secreted SORL1. Interacts with PMEL; this allows the loading of PMEL luminal fragment on ILVs to induce fibril nucleation. APOE exists as multiple glycosylated and sialylated glycoforms within cells and in plasma. The extent of glycosylation and sialylation are tissue and context specific. Post-translationally, glycated in plasma VLDL. In terms of processing, phosphorylated by FAM20C in the extracellular medium.

It is found in the secreted. Its subcellular location is the extracellular space. The protein localises to the extracellular matrix. It localises to the extracellular vesicle. The protein resides in the endosome. It is found in the multivesicular body. In terms of biological role, APOE is an apolipoprotein, a protein associating with lipid particles, that mainly functions in lipoprotein-mediated lipid transport between organs via the plasma and interstitial fluids. APOE is a core component of plasma lipoproteins and is involved in their production, conversion and clearance. Apolipoproteins are amphipathic molecules that interact both with lipids of the lipoprotein particle core and the aqueous environment of the plasma. As such, APOE associates with chylomicrons, chylomicron remnants, very low density lipoproteins (VLDL) and intermediate density lipoproteins (IDL) but shows a preferential binding to high-density lipoproteins (HDL). It also binds a wide range of cellular receptors including the LDL receptor/LDLR and the very low-density lipoprotein receptor/VLDLR that mediate the cellular uptake of the APOE-containing lipoprotein particles. Finally, APOE also has a heparin-binding activity and binds heparan-sulfate proteoglycans on the surface of cells, a property that supports the capture and the receptor-mediated uptake of APOE-containing lipoproteins by cells. The sequence is that of Apolipoprotein E (APOE) from Balaenoptera acutorostrata scammoni (North Pacific minke whale).